Here is a 206-residue protein sequence, read N- to C-terminus: 2,3-bisphosphoglycerate-dependent phosphoglycerate mutase (206 aa).

Residues 9–16, 22–23, Arg61, 88–91, Lys99, 115–116, and 159–160 contribute to the substrate site; these read RHGQSEWN, TG, ERNY, RR, and GN. Residue His10 is the Tele-phosphohistidine intermediate of the active site. Glu88 (proton donor/acceptor) is an active-site residue.

It belongs to the phosphoglycerate mutase family. BPG-dependent PGAM subfamily. In terms of assembly, homodimer.

It carries out the reaction (2R)-2-phosphoglycerate = (2R)-3-phosphoglycerate. It participates in carbohydrate degradation; glycolysis; pyruvate from D-glyceraldehyde 3-phosphate: step 3/5. Catalyzes the interconversion of 2-phosphoglycerate and 3-phosphoglycerate. The sequence is that of 2,3-bisphosphoglycerate-dependent phosphoglycerate mutase from Bartonella henselae (strain ATCC 49882 / DSM 28221 / CCUG 30454 / Houston 1) (Rochalimaea henselae).